Reading from the N-terminus, the 107-residue chain is Ferredoxin (107 aa).

Residues 1–8 (MVSGVSRN) constitute a propeptide that is removed on maturation. [2Fe-2S] cluster-binding residues include C45, C51, and C54.

[2Fe-2S] cluster is required as a cofactor.

The protein localises to the hydrogenosome. Its function is as follows. Ferredoxins are iron-sulfur proteins that transfer electrons in a wide variety of metabolic reactions. The sequence is that of Ferredoxin from Psalteriomonas lanterna (Amoeboflagellate).